The primary structure comprises 392 residues: Leucine-rich repeat-containing protein 74B (392 aa).

The tract at residues 24–46 is disordered; sequence RLSGVPEAEQGPEANWDSDLETE. 9 LRR repeats span residues 106-129, 134-157, 162-185, 192-213, 220-241, 248-269, 276-297, 304-325, and 334-356; these read NPYV…ALAG, SSSI…ALCA, NQAM…HLAE, DLKS…TLGP, GLTE…AFAR, FLKV…AVGE, VLEE…SLGL, TLRI…GLLK, and ALEL…ASSV.

This is Leucine-rich repeat-containing protein 74B from Homo sapiens (Human).